We begin with the raw amino-acid sequence, 123 residues long: Small ribosomal subunit protein uS12 (123 aa).

Asp-89 carries the post-translational modification 3-methylthioaspartic acid. A disordered region spans residues Thr-101 to Lys-123. Residues Arg-110–Lys-123 show a composition bias toward basic residues.

This sequence belongs to the universal ribosomal protein uS12 family. In terms of assembly, part of the 30S ribosomal subunit. Contacts proteins S8 and S17. May interact with IF1 in the 30S initiation complex.

Its function is as follows. With S4 and S5 plays an important role in translational accuracy. In terms of biological role, interacts with and stabilizes bases of the 16S rRNA that are involved in tRNA selection in the A site and with the mRNA backbone. Located at the interface of the 30S and 50S subunits, it traverses the body of the 30S subunit contacting proteins on the other side and probably holding the rRNA structure together. The combined cluster of proteins S8, S12 and S17 appears to hold together the shoulder and platform of the 30S subunit. This is Small ribosomal subunit protein uS12 from Paramagnetospirillum magneticum (strain ATCC 700264 / AMB-1) (Magnetospirillum magneticum).